Here is a 426-residue protein sequence, read N- to C-terminus: D-tagatose-1,6-bisphosphate aldolase subunit KbaZ (426 aa).

The protein belongs to the GatZ/KbaZ family. KbaZ subfamily. In terms of assembly, forms a complex with KbaY.

The protein operates within carbohydrate metabolism; D-tagatose 6-phosphate degradation; D-glyceraldehyde 3-phosphate and glycerone phosphate from D-tagatose 6-phosphate: step 2/2. Its function is as follows. Component of the tagatose-1,6-bisphosphate aldolase KbaYZ that is required for full activity and stability of the Y subunit. Could have a chaperone-like function for the proper and stable folding of KbaY. When expressed alone, KbaZ does not show any aldolase activity. The polypeptide is D-tagatose-1,6-bisphosphate aldolase subunit KbaZ (Escherichia coli O1:K1 / APEC).